The primary structure comprises 313 residues: Protein EMSY-LIKE 2 (313 aa).

Residues 1-88 (MEAQIHILEQ…HQSLDVHPSP (88 aa)) enclose the ENT domain. Residues 35–58 (MTNLRKELRISDDENRQLLNNVHN) adopt a coiled-coil conformation. Disordered stretches follow at residues 84-106 (VHPS…YPSI) and 195-229 (LNVG…REHL). The segment covering 206-219 (GNRRTLSHGGRGRG) has biased composition (basic residues). Residues 267–293 (HELDKAKKLLKEHEQALIAAIARLTDA) adopt a coiled-coil conformation. The residue at position 294 (Ser294) is a Phosphoserine. The disordered stretch occupies residues 294 to 313 (SDYESDGEEPYSHELPMLLG).

In terms of assembly, interacts with EDM2 in nucleus.

It is found in the nucleus. In terms of biological role, probably involved in the regulation of chromatin states. Contributes to RPP7-mediated and basal immunity, especially against Hyaloperonospora arabidopsidis isolate Hiks1. Regulates negatively EDM2-dependent floral transition. This is Protein EMSY-LIKE 2 from Arabidopsis thaliana (Mouse-ear cress).